Here is a 941-residue protein sequence, read N- to C-terminus: PHD finger protein 14 (941 aa).

Residues 22-295 (DYDSSDDSDF…LSQSKSNEDS (274 aa)) form a disordered region. Phosphoserine occurs at positions 26 and 29. Over residues 36–47 (ASDSEGSGNGSE) the composition is skewed to low complexity. Positions 60-72 (DSEENILEEELNE) are enriched in acidic residues. Composition is skewed to basic and acidic residues over residues 74-85 (IQVKEEQLKNST), 94-109 (QLIK…NGER), and 116-132 (KEKE…EKAT). S84 carries the phosphoserine modification. Low complexity predominate over residues 133-166 (VSDSAAASAAGTTPATSPPAVTSPSVPTTTTTTT). S189 carries the post-translational modification Phosphoserine. 2 stretches are compositionally biased toward acidic residues: residues 194 to 205 (NAMDDYDSEDDN) and 226 to 249 (DGDN…EGND). Phosphotyrosine is present on Y199. Residue S201 is modified to Phosphoserine. T280 carries the phosphothreonine modification. The segment covering 281–290 (NDSLTLSQSK) has biased composition (polar residues). Residues S283, S287, S291, S295, and S301 each carry the phosphoserine modification. A PHD-type 1 zinc finger spans residues 312-373 (ILICCVCLGD…PWFCDACKCG (62 aa)). Zn(2+)-binding residues include C315, C318, C332, C335, H340, and C343. S352 carries the post-translational modification Phosphoserine. C367, C370, C378, C381, H398, C401, C434, C437, C451, C456, H461, C464, C488, and H491 together coordinate Zn(2+). Residues 375–408 (SPSCELCPNQDGIFKETDAGRWVHIVCALYVPGV) form a C2HC pre-PHD-type zinc finger. The PHD-type 2 zinc finger occupies 432–492 (KECSFCEDPR…PFFAYCKQHA (61 aa)). A Phosphoserine modification is found at S523. Residues 623 to 671 (MIQIQENMAEQKNIKDKLENEQEKLHVEYNKLCESLEELQNLNGKLRSE) adopt a coiled-coil conformation. The PHD-type 3 zinc finger occupies 718–772 (LYSCGICKKNHDQHLLLLCDTCKLHYHLGCLDPPLTRMPRKTKNSYWQCSECDQA). Zn(2+)-binding residues include C721, C724, C736, C739, H744, C747, C766, and C769. Phosphoserine occurs at positions 774, 775, and 828. Residues 804–855 (VPQDVPPEPKKIPIRNTRTRGRKRSFVPEEEKHEERVPRERRQRQSVLQKKP) form a disordered region. Residues 829 to 843 (FVPEEEKHEERVPRE) show a composition bias toward basic and acidic residues. A PHD-type 4 zinc finger spans residues 861–914 (RTECSTCKGTGDNENLVRCDECRLCYHFGCLDPPLKKSPKQTGYGWICQECDSS). Zn(2+) is bound by residues C864, C867, C879, C882, H887, C890, C908, and C911. The interval 912–941 (DSSSSKEDENEAEKKNASQELSMEQKTPKK) is disordered. Residues 915–928 (SSKEDENEAEKKNA) show a composition bias toward basic and acidic residues. Over residues 930-941 (QELSMEQKTPKK) the composition is skewed to polar residues.

As to expression, high levels detected in testis, lung and spleen and low levels in muscle, heart, intestine and kidney (at protein level). Widely expressed in adult with increased levels in intestine, colon and lung.

It localises to the nucleus. The protein localises to the chromosome. The protein resides in the cytoplasm. Functionally, histone-binding protein. Binds preferentially to unmodified histone H3 but can also bind to a lesser extent to histone H3 trimethylated at 'Lys-9' (H3K9me3) as well as to histone H3 monomethylated at 'Lys-27' (H3K27ac) and trimethylated at 'Lys-27' (H3K27me3). Represses PDGFRA expression, thus playing a role in regulation of mesenchymal cell proliferation. Suppresses the expression of CDKN1A/p21 by reducing the level of trimethylation of histone H3 'Lys-4', leading to enhanced proliferation of germinal center B cells. This is PHD finger protein 14 (Phf14) from Mus musculus (Mouse).